The following is a 477-amino-acid chain: Bifunctional protein HldE (477 aa).

The segment at 1–318 (MKVNLPAFER…ENAVRGRADT (318 aa)) is ribokinase. 195–198 (NLSE) serves as a coordination point for ATP. Aspartate 264 is a catalytic residue. The cytidylyltransferase stretch occupies residues 344–477 (MTNGVFDILH…IKKIQTESEK (134 aa)).

This sequence in the N-terminal section; belongs to the carbohydrate kinase PfkB family. The protein in the C-terminal section; belongs to the cytidylyltransferase family. As to quaternary structure, homodimer.

The catalysed reaction is D-glycero-beta-D-manno-heptose 7-phosphate + ATP = D-glycero-beta-D-manno-heptose 1,7-bisphosphate + ADP + H(+). It carries out the reaction D-glycero-beta-D-manno-heptose 1-phosphate + ATP + H(+) = ADP-D-glycero-beta-D-manno-heptose + diphosphate. Its pathway is nucleotide-sugar biosynthesis; ADP-L-glycero-beta-D-manno-heptose biosynthesis; ADP-L-glycero-beta-D-manno-heptose from D-glycero-beta-D-manno-heptose 7-phosphate: step 1/4. It functions in the pathway nucleotide-sugar biosynthesis; ADP-L-glycero-beta-D-manno-heptose biosynthesis; ADP-L-glycero-beta-D-manno-heptose from D-glycero-beta-D-manno-heptose 7-phosphate: step 3/4. Functionally, catalyzes the phosphorylation of D-glycero-D-manno-heptose 7-phosphate at the C-1 position to selectively form D-glycero-beta-D-manno-heptose-1,7-bisphosphate. Catalyzes the ADP transfer from ATP to D-glycero-beta-D-manno-heptose 1-phosphate, yielding ADP-D-glycero-beta-D-manno-heptose. This chain is Bifunctional protein HldE, found in Salmonella agona (strain SL483).